Consider the following 549-residue polypeptide: Putative acyl-CoA synthetase YngI (549 aa).

ATP is bound by residues 198 to 206 (TSGTTGFPK), D423, R438, and K529.

This sequence belongs to the ATP-dependent AMP-binding enzyme family.

In Bacillus subtilis (strain 168), this protein is Putative acyl-CoA synthetase YngI (yngI).